Reading from the N-terminus, the 640-residue chain is uncharacterized protein (640 aa).

A disordered region spans residues 594–614 (QCSSDHCKPGSSETLPEATNE).

This is an uncharacterized protein from Rattus norvegicus (Rat).